We begin with the raw amino-acid sequence, 388 residues long: UDP-N-acetylglucosamine--N-acetylmuramyl-(pentapeptide) pyrophosphoryl-undecaprenol N-acetylglucosamine transferase (388 aa).

UDP-N-acetyl-alpha-D-glucosamine contacts are provided by residues 15–17 (TGG), Asn125, Arg168, Ser196, and Gln297.

It belongs to the glycosyltransferase 28 family. MurG subfamily.

It is found in the cell inner membrane. It carries out the reaction di-trans,octa-cis-undecaprenyl diphospho-N-acetyl-alpha-D-muramoyl-L-alanyl-D-glutamyl-meso-2,6-diaminopimeloyl-D-alanyl-D-alanine + UDP-N-acetyl-alpha-D-glucosamine = di-trans,octa-cis-undecaprenyl diphospho-[N-acetyl-alpha-D-glucosaminyl-(1-&gt;4)]-N-acetyl-alpha-D-muramoyl-L-alanyl-D-glutamyl-meso-2,6-diaminopimeloyl-D-alanyl-D-alanine + UDP + H(+). It functions in the pathway cell wall biogenesis; peptidoglycan biosynthesis. Functionally, cell wall formation. Catalyzes the transfer of a GlcNAc subunit on undecaprenyl-pyrophosphoryl-MurNAc-pentapeptide (lipid intermediate I) to form undecaprenyl-pyrophosphoryl-MurNAc-(pentapeptide)GlcNAc (lipid intermediate II). This Novosphingobium aromaticivorans (strain ATCC 700278 / DSM 12444 / CCUG 56034 / CIP 105152 / NBRC 16084 / F199) protein is UDP-N-acetylglucosamine--N-acetylmuramyl-(pentapeptide) pyrophosphoryl-undecaprenol N-acetylglucosamine transferase.